Consider the following 217-residue polypeptide: Somatotropin (217 aa).

The N-terminal stretch at 1-26 (MAPGSWFSPLFIAVITLGLQWPKEAA) is a signal peptide. His-46 is a binding site for Zn(2+). Residues Cys-79 and Cys-190 are joined by a disulfide bond. A Zn(2+)-binding site is contributed by Glu-199. A disulfide bridge links Cys-207 with Cys-215.

Belongs to the somatotropin/prolactin family.

It localises to the secreted. Its function is as follows. Growth hormone plays an important role in growth control. The protein is Somatotropin (GH) of Struthio camelus (Common ostrich).